The following is a 320-amino-acid chain: 4-diphosphocytidyl-2-C-methyl-D-erythritol kinase (320 aa).

Lys20 is a catalytic residue. Residue 112–122 coordinates ATP; that stretch reads PVAGGMGGGSA. Residue Asp154 is part of the active site.

It belongs to the GHMP kinase family. IspE subfamily.

The enzyme catalyses 4-CDP-2-C-methyl-D-erythritol + ATP = 4-CDP-2-C-methyl-D-erythritol 2-phosphate + ADP + H(+). Its pathway is isoprenoid biosynthesis; isopentenyl diphosphate biosynthesis via DXP pathway; isopentenyl diphosphate from 1-deoxy-D-xylulose 5-phosphate: step 3/6. In terms of biological role, catalyzes the phosphorylation of the position 2 hydroxy group of 4-diphosphocytidyl-2C-methyl-D-erythritol. This is 4-diphosphocytidyl-2-C-methyl-D-erythritol kinase from Pseudarthrobacter chlorophenolicus (strain ATCC 700700 / DSM 12829 / CIP 107037 / JCM 12360 / KCTC 9906 / NCIMB 13794 / A6) (Arthrobacter chlorophenolicus).